A 1514-amino-acid polypeptide reads, in one-letter code: Polycomb group protein ASXL1 (1514 aa).

The HTH HARE-type domain maps to 11-86; sequence RTWAEAARLV…RISLFTLKKD (76 aa). Disordered stretches follow at residues 95–170 and 183–249; these read ATVD…VMLP and HVEP…RGEE. Positions 98 to 107 are enriched in acidic residues; that stretch reads DGDEPEDSAD. Residues 111-145 are compositionally biased toward polar residues; it reads CGSNEASTVSGENDVSLDETSSNASCSTESQSRPL. Positions 199 to 209 are enriched in low complexity; sequence SGSPSSSSSGS. An interaction with nucleosomal DNA forming a DNA clamp with BAP1 region spans residues 243-246; sequence KRNR. Residues 255-364 form the DEUBAD domain; the sequence is PGSILVNTNL…FEDYYGQKLG (110 aa). The LXXLL motif 1 motif lies at 284–288; it reads LLLLL. Positions 300-655 are interaction with NCOA1; sequence LLRLSGSALN…GGGSGAIDEG (356 aa). The short motif at 310-315 is the NEF motif element; sequence NEFFTH. The interval 336 to 346 is interaction with nucleosomal DNA; the sequence is RLRQEMEKEKK. Disordered stretches follow at residues 378–543, 635–823, 895–914, 926–952, and 964–995; these read EEAK…EDRQ, TTAI…FDNM, SDPE…EKEW, SVPQ…SDSE, and ISEA…VDAS. Residues 408 to 415 carry the Nuclear localization signal motif; that stretch reads FKKRSRPD. Polar residues predominate over residues 458–473; it reads VNSTPGPDVSSATSGQ. Residues S498 and S500 each carry the phosphoserine modification. Composition is skewed to basic and acidic residues over residues 514 to 525 and 533 to 543; these read QETKDQKRKSFE and PEKKPRLEDRQ. The span at 638-654 shows a compositional bias: gly residues; sequence IGGGGGPGGGGSGAIDE. Polar residues predominate over residues 678–692; the sequence is PSTSGESASDLQRTQ. 2 stretches are compositionally biased toward basic and acidic residues: residues 713 to 728 and 779 to 793; these read ARRE…ESCL and LLDD…REDQ. The LXXLL motif 2 signature appears at 808-812; that stretch reads LGDLL. Polar residues predominate over residues 971-980; that stretch reads HSESTDTASD. The segment at 1082–1087 is required for interaction with RARA; the sequence is LVMHLL. Disordered stretches follow at residues 1095–1131, 1213–1234, and 1256–1338; these read KVLP…ENNR, EQKE…GQCL, and SEQT…VSAD. Positions 1119–1129 are enriched in polar residues; that stretch reads DRGTLQGTGEN. Polar residues-rich tracts occupy residues 1256–1269 and 1313–1324; these read SEQT…QNNA and SKNSVSGGVQTT. The PHD-type; atypical zinc-finger motif lies at 1476-1513; it reads SLQCACSLKAMIMCQGCGAFCHDDCIGPSKLCVLCLVV.

It belongs to the Asx family. In terms of assembly, core component of the polycomb repressive deubiquitinase (PR-DUB) complex, at least composed of BAP1, one of ASXL1, ASXL2 or (probably) ASXL3, and one of MBD5 or MBD6. Distinct combinations of ASXL and MBD proteins may preferentially bind specific histone modification marks. The PR-DUB core associates with a number of accessory proteins, including FOXK1, FOXK2, KDM1B, HCFC1 and OGT; KDM1B specifically associates with ASXL2 PR-DUB complexes. Interacts (via DEUBAD domain) with BAP1 (via ULD domain); the interaction is direct and forms a ubiquitin binding cleft. The interaction with BAP1 is important for maintaining BAP1 stability. Together with BAP1, associates (via DEUBAD domain) with nucleosomes; interacts with nucleosomal DNA and stabilizes the orientation of the nucleosome to line up the PR-DUB complex active site with its H2AK118ub1 substrate. Interacts (via PHD domain) with MBD5 and MBD6 (via MBD domain); the interaction is probably direct and mediates association of MBD proteins with the PR-DUB core. Interacts with RARA, RXRA. Interacts with NCOA1. Interacts with PPARA and PPARG. Ubiquitinated by TRIP12, leading to its subsequent degradation following binding of N(6)-methyladenine methylated DNA (6mA).

It is found in the nucleus. Functionally, probable Polycomb group (PcG) protein involved in transcriptional regulation mediated by ligand-bound nuclear hormone receptors, such as retinoic acid receptors (RARs) and peroxisome proliferator-activated receptor gamma (PPARG). Acts as a coactivator of RARA and RXRA through association with NCOA1. Acts as a corepressor for PPARG and suppresses its adipocyte differentiation-inducing activity. Non-catalytic component of the PR-DUB complex, a complex that specifically mediates deubiquitination of histone H2A monoubiquitinated at 'Lys-119' (H2AK119ub1). Acts as a sensor of N(6)-methyladenine methylation on DNA (6mA): recognizes and binds 6mA DNA, leading to its ubiquitination and degradation by TRIP12, thereby inactivating the PR-DUB complex and regulating Polycomb silencing. The PR-DUB complex is an epigenetic regulator of gene expression and acts as a transcriptional coactivator, affecting genes involved in development, cell communication, signaling, cell proliferation and cell viability. ASXL1, ASXL2 and ASXL3 function redundantly in the PR-DUB complex. The ASXL proteins are essential for chromatin recruitment and transcriptional activation of associated genes. ASXL1 and ASXL2 are important for BAP1 protein stability. Together with BAP1, negatively regulates epithelial-mesenchymal transition (EMT) of trophoblast stem cells during placental development by regulating genes involved in epithelial cell integrity, cell adhesion and cytoskeletal organization. The sequence is that of Polycomb group protein ASXL1 (Asxl1) from Mus musculus (Mouse).